The sequence spans 267 residues: N-formylglutamate deformylase (267 aa).

This sequence belongs to the N-formylglutamate deformylase family. As to quaternary structure, monomer.

The catalysed reaction is N-formyl-L-glutamate + H2O = formate + L-glutamate. It functions in the pathway amino-acid degradation; L-histidine degradation into L-glutamate; L-glutamate from N-formimidoyl-L-glutamate (deiminase route): step 2/2. Its activity is regulated as follows. Stimulated by Co(2+). Fe(2+) is also a good activator, particularly at lower concentrations, but it inhibits slightly the activity when used at concentrations over 0.1 mM. Other divalent metals tested (Cd(2+), Ca(2+), Mn(2+), Zn(2+), Ni(2+) and Mg(2+)) are not effective activators. Its function is as follows. Catalyzes the hydrolysis of N-formyl-L-glutamate to formate and L-glutamate. The chain is N-formylglutamate deformylase from Pseudomonas putida (Arthrobacter siderocapsulatus).